We begin with the raw amino-acid sequence, 422 residues long: Gamma-glutamyl phosphate reductase (422 aa).

This sequence belongs to the gamma-glutamyl phosphate reductase family.

Its subcellular location is the cytoplasm. The catalysed reaction is L-glutamate 5-semialdehyde + phosphate + NADP(+) = L-glutamyl 5-phosphate + NADPH + H(+). The protein operates within amino-acid biosynthesis; L-proline biosynthesis; L-glutamate 5-semialdehyde from L-glutamate: step 2/2. In terms of biological role, catalyzes the NADPH-dependent reduction of L-glutamate 5-phosphate into L-glutamate 5-semialdehyde and phosphate. The product spontaneously undergoes cyclization to form 1-pyrroline-5-carboxylate. In Saccharophagus degradans (strain 2-40 / ATCC 43961 / DSM 17024), this protein is Gamma-glutamyl phosphate reductase.